A 213-amino-acid chain; its full sequence is Maleamate amidohydrolase (213 aa).

C154 (nucleophile) is an active-site residue.

The protein belongs to the isochorismatase family.

It catalyses the reaction maleamate + H2O = maleate + NH4(+). It participates in cofactor degradation; nicotinate degradation. In terms of biological role, maleamate amidase that transforms maleamate into maleate and ammonia in the aerobic nicotinate degradation pathway. This chain is Maleamate amidohydrolase (nicF), found in Pseudomonas putida (strain ATCC 47054 / DSM 6125 / CFBP 8728 / NCIMB 11950 / KT2440).